Here is a 383-residue protein sequence, read N- to C-terminus: Cyclin-D4-2 (383 aa).

Gly residues predominate over residues 51 to 62 (AAGGGGGSGGGG). Disordered stretches follow at residues 51 to 70 (AAGG…EDMF), 313 to 335 (QPKP…PESP), and 354 to 383 (ATIA…KLSR). The span at 323–335 (SASASSSSVPESP) shows a compositional bias: low complexity.

Belongs to the cyclin family. Cyclin D subfamily.

This Oryza sativa subsp. japonica (Rice) protein is Cyclin-D4-2 (CYCD4-2).